A 531-amino-acid chain; its full sequence is UPF0159 protein CPn_0746/CP_1126/CPj0746/CpB0774 (531 aa).

ThyX domains are found at residues 38–274 (KGAL…AEPH) and 309–511 (PSVQ…FKFV).

It belongs to the UPF0159 family.

In Chlamydia pneumoniae (Chlamydophila pneumoniae), this protein is UPF0159 protein CPn_0746/CP_1126/CPj0746/CpB0774.